We begin with the raw amino-acid sequence, 48 residues long: ATP synthase protein 8 (48 aa).

At M1 the chain carries N-formylmethionine. Residues 1-12 (MPQLVPFYFTNQ) are Mitochondrial intermembrane-facing. The chain crosses the membrane as a helical span at residues 13–32 (IFYGFASLSVIVYLFSIYIL). Over 33 to 48 (PHYLEIYVTRIFITKT) the chain is Mitochondrial matrix.

In terms of assembly, F-type ATP synthases have 2 components, the catalytic core F(1) and the membrane-embedded component F(0), linked together by a central stalk and a peripheral stalk. The central stalk, also called rotor shaft, is often seen as part of F(1). The peripheral stalk is seen as part of F(0). F(0) contains the membrane channel next to the rotor. F-type ATP synthases form dimers but each monomer functions independently in ATP generation. The dimer consists of 17 different polypeptides: ATP1 (subunit alpha, 3 molecules per monomer, part of F(1)), ATP2 (subunit beta, 3 copies per monomer, part of F(1)), ATP3 (subunit gamma, part of the central stalk), ATP4 (subunit b, part of the peripheral stalk), ATP5/OSCP (subunit 5/OSCP, part of the peripheral stalk), ATP6 (subunit a, part of the peripheral stalk), ATP7 (subunit d, part of the peripheral stalk), ATP8 (subunit 8, part of the peripheral stalk), OLI1 (subunit c, part of the rotor, 10 molecules per monomer), ATP14 (subunit h, part of the peripheral stalk), ATP15 (subunit epsilon, part of the central stalk), ATP16 (subunit delta, part of the central stalk), ATP17 (subunit f, part of the peripheral stalk), ATP18 (subunit i/j, part of the peripheral stalk), ATP19 (subunit k, dimer-specific, at interface between monomers), ATP20 (subunit g, at interface between monomers), TIM11 (subunit e, at interface between monomers).

Its subcellular location is the mitochondrion inner membrane. In terms of biological role, mitochondrial membrane ATP synthase (F(1)F(0) ATP synthase or Complex V) produces ATP from ADP in the presence of a proton gradient across the membrane which is generated by electron transport complexes of the respiratory chain. F-type ATP synthases consist of two structural domains, F(1) - containing the extramembraneous catalytic core, and F(0) - containing the membrane proton channel, linked together by a central stalk and a peripheral stalk. During catalysis, ATP synthesis in the catalytic domain of F(1) is coupled via a rotary mechanism of the central stalk subunits to proton translocation. Part of the complex F(0) domain. Minor subunit located with subunit a/ATP6 in the membrane. In Yarrowia lipolytica (strain CLIB 122 / E 150) (Yeast), this protein is ATP synthase protein 8.